Consider the following 396-residue polypeptide: G-protein coupled receptor 84 (396 aa).

Residues 1-21 (MWNSSDANFSCYHESVLGYRY) are Extracellular-facing. Asn-3 and Asn-8 each carry an N-linked (GlcNAc...) asparagine glycan. Residues 22–42 (FAVIWGVAVAVTGTVGNVLTL) traverse the membrane as a helical segment. The Cytoplasmic portion of the chain corresponds to 43–57 (LALAIRPKLRTRFNL). The chain crosses the membrane as a helical span at residues 58 to 78 (LIANLTLADLLYCTLLQPFSV). Residues 79 to 94 (DTYLHLHWRTGAVFCR) are Extracellular-facing. Residues 95 to 115 (IFGLLLFTSNSVSILTLCLIA) form a helical membrane-spanning segment. The Cytoplasmic portion of the chain corresponds to 116–135 (LGRYLLIAHPKLFPQVFSAK). A helical transmembrane segment spans residues 136-156 (GIVLALVGSWVVGVTSFAPLW). At 157 to 180 (NVFVLVPVVCTCSFDRMRGRPYTT) the chain is on the extracellular side. The helical transmembrane segment at 181–201 (ILMGIYFVLGLSSVGVFYCLI) threads the bilayer. Residues 202–320 (HRQVKRAARA…PSEFGKVTRM (119 aa)) are Cytoplasmic-facing. Residues Ser-221 and Ser-224 each carry the phosphoserine modification. Residues 241–310 (LDSGVASRGP…TAGARRATDA (70 aa)) are disordered. A compositionally biased stretch (polar residues) spans 253 to 269 (GISSEPVSAATTQTLEG). A phosphothreonine mark is found at Thr-263 and Thr-264. The span at 290-308 (SLPEVHRKPRETAGARRAT) shows a compositional bias: basic and acidic residues. The chain crosses the membrane as a helical span at residues 321 to 341 (CFAVFLCFALSYIPFLLLNIL). Over 342–352 (DARGRAPRVVH) the chain is Extracellular. A helical transmembrane segment spans residues 353-373 (MVAANLTWLNSCINPVLYAAM). Over 374–396 (NRQFRHAYGSILKRGPQSFRRFH) the chain is Cytoplasmic.

Belongs to the G-protein coupled receptor 1 family. As to quaternary structure, interacts with ARRB2 and ARR3. Post-translationally, phosphorylated by a subset of GPR84-activating ligands. Constitutively phosphorylated at Ser-221 and Ser-224 in the absence of 2-HTP. By contrast, Thr-263 and Thr-264 are phosphorylated only following prior cell treatment with 2-HTP. As to expression, expressed predominantly in hematopoietic tissues. Expressed mainly in the bone marrow with transcripts also detected in spleen, the lymph node, liver and the lung.

The protein resides in the cell membrane. Its function is as follows. G protein-coupled receptor that responds endogenously to dietary fatty acids or nutrient, specifically medium-chain free fatty acid (FFA) with carbon chain lengths of C9 to C14. Capric acid (C10:0), undecanoic acid (C11:0) and lauric acid (C12:0) are the most potent agonists. In immune cells, functions as a pro-inflammatory receptor via 6-OAU and promotes the expression of pro-inflammatory mediators such as TNFalpha, IL-6 and IL-12B as well as stimulating chemotactic responses through activation of signaling mediators AKT, ERK and NF-kappa-B (by sim). In addition, triggers increased bacterial adhesion and phagocytosis in macrophages and regulates pro-inflammatory function via enhancing NLRP3 inflammasome activation. Also plays an important role in inflammation by modulating neutrophil functions. Mechanistically, promotes neutrophil chemotaxis, reactive oxygen species (ROS) production and degranulation via LYN-AKT/ERK pathway. To regulate ROS production, communicates with the two formyl peptide receptors FPR2 and FPR1 to control the NADPH oxidase activity in neutrophils. The chain is G-protein coupled receptor 84 (Gpr84) from Mus musculus (Mouse).